The following is a 109-amino-acid chain: Keratin, type II microfibrillar (109 aa).

Residues 1–10 are linker 1; that stretch reads QNRQCCESNL. An IF rod domain is found at 1 to 109; that stretch reads QNRQCCESNL…RLYEEEIRVL (109 aa). Positions 11–109 are coil 1B; the sequence is EPLFSGYIET…RLYEEEIRVL (99 aa).

It belongs to the intermediate filament family.

Functionally, wool microfibrillar keratin. This Ovis aries (Sheep) protein is Keratin, type II microfibrillar.